An 870-amino-acid polypeptide reads, in one-letter code: H(+)/Cl(-) exchange transporter 6 (870 aa).

The Cytoplasmic portion of the chain corresponds to 1–80 (MAGCRGSVCC…KKGRRYEAVK (80 aa)). 2 helical membrane passes run 81–113 (WMVVFAIGVCTGLVGLFVDFSVRLFTQLKFGVV) and 128–150 (LSLLELLGFNLTFVFLASLLVLI). A Selectivity filter part_1 motif is present at residues 156–160 (GSGIP). Ser157 is a binding site for chloride. An intramembrane region (helical) is located at residues 159–166 (IPEIKCYL). 2 consecutive transmembrane segments (helical) span residues 176 to 194 (RLRTLLCKVFGVLFSVSGG) and 200 to 217 (EGPMIHSGAVVGAGLPQF). The short motif at 198–202 (GKEGP) is the Selectivity filter part_2 element. 2 intramembrane regions (helical) span residues 241-253 (FVSAGAAAGVAAA) and 257-265 (PIGGTLFSL). The next 3 membrane-spanning stretches (helical) occupy residues 277-294 (TWKVLFCSMSATFTLNFF), 335-364 (GFFVVMGVIGGLLGATFNCLNKRLAKYRMR), and 371-392 (KLVRVLESLLVSLVTTVVVFVA). N-linked (GlcNAc...) asparagine glycans are attached at residues Asn410, Asn423, and Asn433. The next 2 helical transmembrane spans lie at 463–482 (PVTLALFFILYFLLACWTFG) and 488–512 (GLFVPSLLCGAAFGRLVANVLKSYI). Residues 488-492 (GLFVP) carry the Selectivity filter part_3 motif. Phe490 is a chloride binding site. The segment at residues 520–534 (GTFALIGAAAFLGGV) is an intramembrane region (helical). The segment at residues 535 to 537 (VRM) is an intramembrane region (note=Loop between two helices). The segment at residues 538-549 (TISLTVILIEST) is an intramembrane region (helical). Positions 550-553 (NEIT) form an intramembrane region, note=Loop between two helices. The helical transmembrane segment at 554 to 572 (YGLPIMVTLMVAKWTGDLF) threads the bilayer. The Cytoplasmic segment spans residues 573-870 (NKGIYDVHIG…ARLRQHYQTL (298 aa)). Tyr577 contributes to the chloride binding site. In terms of domain architecture, CBS 1 spans 606 to 663 (MEPNLTYVYPHTRIQSLVSILRTTVHHAFPVVTENRGNEKEFMKGNQLISNNIKFKKS). 631 to 633 (HHA) contacts ATP. A Phosphoserine modification is found at Ser774. One can recognise a CBS 2 domain in the interval 808-869 (MNPSPFTVSP…QARLRQHYQT (62 aa)). Position 850–853 (850–853 (TRHN)) interacts with ATP.

It belongs to the chloride channel (TC 2.A.49) family. ClC-6/CLCN6 subfamily. In terms of processing, N-glycosylated on several asparagine residues. As to expression, detected in whole brain and in hippocampus neurons (at protein level). Detected in brain, trigeminus, dorsal root ganglion, spinal cord, eye, kidney, testis, skeletal muscle, thymus and pancreas. Isoform ClC-6c is expressed only in kidney.

It is found in the late endosome membrane. The catalysed reaction is 2 chloride(in) + H(+)(out) = 2 chloride(out) + H(+)(in). Its function is as follows. Voltage-gated channel mediating the exchange of chloride ions against protons. Functions as antiporter and contributes to the acidification of the late endosome lumen. The CLC channel family contains both chloride channels and proton-coupled anion transporters that exchange chloride or another anion for protons. The presence of conserved gating glutamate residues is typical for family members that function as antiporters. The polypeptide is H(+)/Cl(-) exchange transporter 6 (Mus musculus (Mouse)).